The following is a 387-amino-acid chain: Flap endonuclease 1 (387 aa).

The segment at 1–104 is N-domain; that stretch reads MGIKGLSQLI…GELEKRKERQ (104 aa). Asp34 serves as a coordination point for Mg(2+). Residue Arg70 participates in DNA binding. Mg(2+)-binding residues include Asp86, Glu158, Glu160, Asp179, and Asp181. An I-domain region spans residues 122–253; that stretch reads KMVMWNKRTT…KKALAMIKKY (132 aa). DNA is bound at residue Glu158. 2 residues coordinate DNA: Gly231 and Asp233. Position 233 (Asp233) interacts with Mg(2+). Positions 332–387 are disordered; it reads SSRGKPTQTRLDGFFTPVASSSTTKKKAPAKKDDKKSATDKKRKAADASTSSKKKK. Residues 338–346 are interaction with PCNA; that stretch reads TQTRLDGFF. Basic and acidic residues predominate over residues 361 to 371; it reads AKKDDKKSATD. Residues 378-387 show a composition bias toward low complexity; that stretch reads DASTSSKKKK.

The protein belongs to the XPG/RAD2 endonuclease family. FEN1 subfamily. As to quaternary structure, interacts with PCNA. Three molecules of FEN1 bind to one PCNA trimer with each molecule binding to one PCNA monomer. PCNA stimulates the nuclease activity without altering cleavage specificity. Mg(2+) is required as a cofactor. Post-translationally, phosphorylated. Phosphorylation upon DNA damage induces relocalization to the nuclear plasma.

The protein resides in the nucleus. It localises to the nucleolus. The protein localises to the nucleoplasm. Its subcellular location is the mitochondrion. Structure-specific nuclease with 5'-flap endonuclease and 5'-3' exonuclease activities involved in DNA replication and repair. During DNA replication, cleaves the 5'-overhanging flap structure that is generated by displacement synthesis when DNA polymerase encounters the 5'-end of a downstream Okazaki fragment. It enters the flap from the 5'-end and then tracks to cleave the flap base, leaving a nick for ligation. Also involved in the long patch base excision repair (LP-BER) pathway, by cleaving within the apurinic/apyrimidinic (AP) site-terminated flap. Acts as a genome stabilization factor that prevents flaps from equilibrating into structures that lead to duplications and deletions. Also possesses 5'-3' exonuclease activity on nicked or gapped double-stranded DNA, and exhibits RNase H activity. Also involved in replication and repair of rDNA and in repairing mitochondrial DNA. The polypeptide is Flap endonuclease 1 (Naegleria gruberi (Amoeba)).